A 483-amino-acid chain; its full sequence is Cysteine--tRNA ligase (483 aa).

Cys-27 contacts Zn(2+). A 'HIGH' region motif is present at residues 29 to 39; sequence ITAYDYCHIGH. Zn(2+) is bound by residues Cys-208, His-231, and Glu-235. Positions 263-267 match the 'KMSKS' region motif; it reads KMSKS. Lys-266 contributes to the ATP binding site.

Belongs to the class-I aminoacyl-tRNA synthetase family. In terms of assembly, monomer. The cofactor is Zn(2+).

It localises to the cytoplasm. The enzyme catalyses tRNA(Cys) + L-cysteine + ATP = L-cysteinyl-tRNA(Cys) + AMP + diphosphate. The polypeptide is Cysteine--tRNA ligase (Desulfovibrio desulfuricans (strain ATCC 27774 / DSM 6949 / MB)).